We begin with the raw amino-acid sequence, 197 residues long: Dephospho-CoA kinase (197 aa).

Residues 2–197 enclose the DPCK domain; sequence IIGITGGIAS…SALLLLANPR (196 aa). 10 to 15 is a binding site for ATP; the sequence is ASGKST.

This sequence belongs to the CoaE family.

It is found in the cytoplasm. The enzyme catalyses 3'-dephospho-CoA + ATP = ADP + CoA + H(+). It participates in cofactor biosynthesis; coenzyme A biosynthesis; CoA from (R)-pantothenate: step 5/5. Its function is as follows. Catalyzes the phosphorylation of the 3'-hydroxyl group of dephosphocoenzyme A to form coenzyme A. This is Dephospho-CoA kinase from Streptococcus pyogenes serotype M1.